A 72-amino-acid chain; its full sequence is SPbeta prophage-derived uncharacterized protein YopT (72 aa).

As to quaternary structure, homodimer.

This Bacillus subtilis (strain 168) protein is SPbeta prophage-derived uncharacterized protein YopT (yopT).